A 361-amino-acid polypeptide reads, in one-letter code: Probable dual-specificity RNA methyltransferase RlmN (361 aa).

The active-site Proton acceptor is the Glu-91. The region spanning 97-329 (QHYGLSVCVT…KKKGVNCVVR (233 aa)) is the Radical SAM core domain. A disulfide bridge connects residues Cys-104 and Cys-340. [4Fe-4S] cluster-binding residues include Cys-111, Cys-115, and Cys-118. S-adenosyl-L-methionine-binding positions include 163–164 (GE), Ser-195, 218–220 (SLH), and Asn-296. Cys-340 acts as the S-methylcysteine intermediate in catalysis.

This sequence belongs to the radical SAM superfamily. RlmN family. [4Fe-4S] cluster is required as a cofactor.

It is found in the cytoplasm. The catalysed reaction is adenosine(2503) in 23S rRNA + 2 reduced [2Fe-2S]-[ferredoxin] + 2 S-adenosyl-L-methionine = 2-methyladenosine(2503) in 23S rRNA + 5'-deoxyadenosine + L-methionine + 2 oxidized [2Fe-2S]-[ferredoxin] + S-adenosyl-L-homocysteine. It carries out the reaction adenosine(37) in tRNA + 2 reduced [2Fe-2S]-[ferredoxin] + 2 S-adenosyl-L-methionine = 2-methyladenosine(37) in tRNA + 5'-deoxyadenosine + L-methionine + 2 oxidized [2Fe-2S]-[ferredoxin] + S-adenosyl-L-homocysteine. Specifically methylates position 2 of adenine 2503 in 23S rRNA and position 2 of adenine 37 in tRNAs. This is Probable dual-specificity RNA methyltransferase RlmN from Streptococcus pneumoniae serotype 4 (strain ATCC BAA-334 / TIGR4).